The chain runs to 296 residues: ATP phosphoribosyltransferase (296 aa).

Belongs to the ATP phosphoribosyltransferase family.

Its subcellular location is the cytoplasm. The enzyme catalyses 1-(5-phospho-beta-D-ribosyl)-ATP + diphosphate = 5-phospho-alpha-D-ribose 1-diphosphate + ATP. It functions in the pathway amino-acid biosynthesis; L-histidine biosynthesis; L-histidine from 5-phospho-alpha-D-ribose 1-diphosphate: step 1/9. Its function is as follows. Catalyzes the condensation of ATP and 5-phosphoribose 1-diphosphate to form N'-(5'-phosphoribosyl)-ATP (PR-ATP). Has a crucial role in the pathway because the rate of histidine biosynthesis seems to be controlled primarily by regulation of the enzymatic activity. This is ATP phosphoribosyltransferase (HIS1) from Yarrowia lipolytica (strain CLIB 122 / E 150) (Yeast).